Reading from the N-terminus, the 132-residue chain is MGLIVYYSSRSENTHRFLLKLERRLFRLPLGAEEDVPQVSEPYVLVTPTYGGGGTKGAVPKPVIRFLNEPSNRNLIRGVIAAGNTNFGAAFASAGDIVSRKCAVPFLYRFELLGTEEDVANVKHGLERFWTR.

It belongs to the NrdI family.

Its function is as follows. Probably involved in ribonucleotide reductase function. This is Protein NrdI from Agrobacterium fabrum (strain C58 / ATCC 33970) (Agrobacterium tumefaciens (strain C58)).